The sequence spans 172 residues: Cytidylate kinase (172 aa).

Residue 7–15 (GLAGTGTTT) participates in ATP binding.

The protein belongs to the cytidylate kinase family. Type 2 subfamily.

It is found in the cytoplasm. It carries out the reaction CMP + ATP = CDP + ADP. The enzyme catalyses dCMP + ATP = dCDP + ADP. The chain is Cytidylate kinase from Methanobrevibacter smithii (strain ATCC 35061 / DSM 861 / OCM 144 / PS).